The chain runs to 373 residues: T-protein (373 aa).

One can recognise a Chorismate mutase domain in the interval 1–90 (MVAELTALRD…ESYTSENDKG (90 aa)). In terms of domain architecture, Prephenate/arogenate dehydrogenase spans 99–361 (RPVVIVGGKG…DHAKRFLVES (263 aa)).

It in the C-terminal section; belongs to the prephenate/arogenate dehydrogenase family.

It localises to the cytoplasm. The enzyme catalyses chorismate = prephenate. It catalyses the reaction prephenate + NAD(+) = 3-(4-hydroxyphenyl)pyruvate + CO2 + NADH. It functions in the pathway amino-acid biosynthesis; L-tyrosine biosynthesis; (4-hydroxyphenyl)pyruvate from prephenate (NAD(+) route): step 1/1. Its pathway is metabolic intermediate biosynthesis; prephenate biosynthesis; prephenate from chorismate: step 1/1. This is T-protein (tyrA) from Enterobacter agglomerans (Erwinia herbicola).